Consider the following 415-residue polypeptide: Serine hydroxymethyltransferase (415 aa).

(6S)-5,6,7,8-tetrahydrofolate-binding positions include L117 and 121-123; that span reads GHL. At K226 the chain carries N6-(pyridoxal phosphate)lysine. Residue E241 participates in (6S)-5,6,7,8-tetrahydrofolate binding.

Belongs to the SHMT family. Homodimer. Pyridoxal 5'-phosphate serves as cofactor.

It is found in the cytoplasm. It catalyses the reaction (6R)-5,10-methylene-5,6,7,8-tetrahydrofolate + glycine + H2O = (6S)-5,6,7,8-tetrahydrofolate + L-serine. It participates in one-carbon metabolism; tetrahydrofolate interconversion. Its pathway is amino-acid biosynthesis; glycine biosynthesis; glycine from L-serine: step 1/1. In terms of biological role, catalyzes the reversible interconversion of serine and glycine with tetrahydrofolate (THF) serving as the one-carbon carrier. This reaction serves as the major source of one-carbon groups required for the biosynthesis of purines, thymidylate, methionine, and other important biomolecules. Also exhibits THF-independent aldolase activity toward beta-hydroxyamino acids, producing glycine and aldehydes, via a retro-aldol mechanism. The protein is Serine hydroxymethyltransferase of Bacillus pumilus (strain SAFR-032).